The sequence spans 143 residues: Transcriptional regulator MraZ (143 aa).

SpoVT-AbrB domains follow at residues 5 to 47 and 76 to 119; these read EYEH…PRSV and AADM…APRR.

This sequence belongs to the MraZ family. In terms of assembly, forms oligomers.

It is found in the cytoplasm. The protein resides in the nucleoid. In Roseiflexus sp. (strain RS-1), this protein is Transcriptional regulator MraZ.